A 94-amino-acid polypeptide reads, in one-letter code: Large ribosomal subunit protein eL36 (94 aa).

Residues 1 to 25 (MKNAYKKVRVRYPVKRPDVKRKQRG) are compositionally biased toward basic residues. The tract at residues 1 to 30 (MKNAYKKVRVRYPVKRPDVKRKQRGPRAET) is disordered.

The protein belongs to the eukaryotic ribosomal protein eL36 family. In terms of assembly, component of the large ribosomal subunit.

The protein localises to the cytoplasm. This chain is Large ribosomal subunit protein eL36 (RPL36), found in Encephalitozoon cuniculi (strain GB-M1) (Microsporidian parasite).